A 250-amino-acid polypeptide reads, in one-letter code: UPF0014 membrane protein YjkA (250 aa).

6 helical membrane-spanning segments follow: residues 3–23 (YLSL…SKSF), 32–52 (IIAT…LSLI), 57–77 (HPVF…QNVI), 91–111 (FAAL…LHII), 117–137 (YVIP…SLFL), and 214–234 (LLIV…LSVL).

The protein belongs to the UPF0014 family.

It is found in the cell membrane. This is UPF0014 membrane protein YjkA (yjkA) from Bacillus subtilis (strain 168).